Reading from the N-terminus, the 158-residue chain is NADH-quinone oxidoreductase subunit B (158 aa).

Residues Cys-37, Cys-38, Cys-102, and Cys-132 each coordinate [4Fe-4S] cluster.

It belongs to the complex I 20 kDa subunit family. In terms of assembly, NDH-1 is composed of 14 different subunits. Subunits NuoB, C, D, E, F, and G constitute the peripheral sector of the complex. [4Fe-4S] cluster is required as a cofactor.

The protein resides in the cell inner membrane. It catalyses the reaction a quinone + NADH + 5 H(+)(in) = a quinol + NAD(+) + 4 H(+)(out). NDH-1 shuttles electrons from NADH, via FMN and iron-sulfur (Fe-S) centers, to quinones in the respiratory chain. Couples the redox reaction to proton translocation (for every two electrons transferred, four hydrogen ions are translocated across the cytoplasmic membrane), and thus conserves the redox energy in a proton gradient. This is NADH-quinone oxidoreductase subunit B from Legionella pneumophila (strain Paris).